The primary structure comprises 114 residues: Large ribosomal subunit protein uL22 (114 aa).

The protein belongs to the universal ribosomal protein uL22 family. Part of the 50S ribosomal subunit.

Its function is as follows. This protein binds specifically to 23S rRNA; its binding is stimulated by other ribosomal proteins, e.g. L4, L17, and L20. It is important during the early stages of 50S assembly. It makes multiple contacts with different domains of the 23S rRNA in the assembled 50S subunit and ribosome. The globular domain of the protein is located near the polypeptide exit tunnel on the outside of the subunit, while an extended beta-hairpin is found that lines the wall of the exit tunnel in the center of the 70S ribosome. This chain is Large ribosomal subunit protein uL22, found in Desulfosudis oleivorans (strain DSM 6200 / JCM 39069 / Hxd3) (Desulfococcus oleovorans).